The chain runs to 299 residues: 4-hydroxybenzoate octaprenyltransferase (299 aa).

8 helical membrane passes run Val33 to Val53, Trp56 to Ile76, Asn105 to Asn125, Leu151 to Ile171, Trp180 to Val200, Ala214 to Leu234, His247 to Ala267, and Ala278 to Thr298.

Belongs to the UbiA prenyltransferase family. The cofactor is Mg(2+).

It localises to the cell inner membrane. The enzyme catalyses all-trans-octaprenyl diphosphate + 4-hydroxybenzoate = 4-hydroxy-3-(all-trans-octaprenyl)benzoate + diphosphate. It participates in cofactor biosynthesis; ubiquinone biosynthesis. Functionally, catalyzes the prenylation of para-hydroxybenzoate (PHB) with an all-trans polyprenyl group. Mediates the second step in the final reaction sequence of ubiquinone-8 (UQ-8) biosynthesis, which is the condensation of the polyisoprenoid side chain with PHB, generating the first membrane-bound Q intermediate 3-octaprenyl-4-hydroxybenzoate. This chain is 4-hydroxybenzoate octaprenyltransferase, found in Xylella fastidiosa (strain M23).